The chain runs to 278 residues: Chitosanase (278 aa).

A signal peptide spans 1-41 (MRLKHPTARLALAALLVAVPRSVAAAGTVHAAPAPAGATRL). Glutamate 63 serves as the catalytic Proton donor. The active-site Nucleophile is aspartate 81.

It belongs to the glycosyl hydrolase 46 family.

It localises to the secreted. The enzyme catalyses Endohydrolysis of beta-(1-&gt;4)-linkages between D-glucosamine residues in a partly acetylated chitosan.. In terms of biological role, aids in the defense against invading fungal pathogens by degrading their cell wall chitosan. The protein is Chitosanase (csn) of Nocardioides sp. (strain N106).